Here is a 237-residue protein sequence, read N- to C-terminus: DNA repair protein RecO (237 aa).

This sequence belongs to the RecO family.

In terms of biological role, involved in DNA repair and RecF pathway recombination. This is DNA repair protein RecO from Actinobacillus succinogenes (strain ATCC 55618 / DSM 22257 / CCUG 43843 / 130Z).